Consider the following 186-residue polypeptide: Ribosome maturation factor RimP (186 aa).

The protein belongs to the RimP family.

Its subcellular location is the cytoplasm. In terms of biological role, required for maturation of 30S ribosomal subunits. The polypeptide is Ribosome maturation factor RimP (Rhizorhabdus wittichii (strain DSM 6014 / CCUG 31198 / JCM 15750 / NBRC 105917 / EY 4224 / RW1) (Sphingomonas wittichii)).